We begin with the raw amino-acid sequence, 257 residues long: Fructose-2,6-bisphosphatase TIGAR B (257 aa).

The Tele-phosphohistidine intermediate role is filled by H11. E89 acts as the Proton donor/acceptor in catalysis.

It belongs to the phosphoglycerate mutase family.

The protein localises to the cytoplasm. The protein resides in the nucleus. It is found in the mitochondrion. It catalyses the reaction beta-D-fructose 2,6-bisphosphate + H2O = beta-D-fructose 6-phosphate + phosphate. Fructose-bisphosphatase hydrolyzing fructose-2,6-bisphosphate as well as fructose-1,6-bisphosphate. Acts as a negative regulator of glycolysis by lowering intracellular levels of fructose-2,6-bisphosphate in a p53/TP53-dependent manner, resulting in the pentose phosphate pathway (PPP) activation and NADPH production. Contributes to the generation of reduced glutathione to cause a decrease in intracellular reactive oxygen species (ROS) content, correlating with its ability to protect cells from oxidative or metabolic stress-induced cell death. May play a role in mitophagy inhibition. This chain is Fructose-2,6-bisphosphatase TIGAR B, found in Danio rerio (Zebrafish).